Reading from the N-terminus, the 147-residue chain is RxLR effector protein Avr3a (147 aa).

The N-terminal stretch at 1 to 21 is a signal peptide; that stretch reads MRLAIMLSATAVAINFATSSA. The RxLR-dEER signature appears at 44 to 59; the sequence is RLLRKNEENEETSEER. An N6-acetyllysine modification is found at K48. An effector domain region spans residues 77–147; that stretch reads ALTERADAKK…YMMHLGLTGY (71 aa).

The protein belongs to the RxLR effector family. In terms of assembly, forms homodimers via the RxLR-dEER motif. Interacts with host E3 ligase CMPG1. Interacts with host DRP2. Proteolytically cleaved. The cleavage site directly after the RxLR sequence and the high conservation among other effector proteins suggest that the RxLR motif might play a crucial role in the intracellular processing before secretion. Post-translationally, glycosylated. In terms of processing, N-acetylated at Lys-48 after cleavage.

The protein localises to the secreted. It is found in the host cytoplasm. Its function is as follows. Multifunctional effector that can suppress host BAK1/SERK3-mediated immunity through at least two different pathways. Manipulates plant immunity by targeting and stabilizing host E3 ligase CMPG1. Preventing the normal 26S proteasome-dependent degradation of potato CMPG1, and thus potentially of its protein substrates in the host cell, further abolishes host cell death during the biotrophic phase of infection. Also associates with and affects the function of the dynamin-related protein 2 (DRP2), a plant GTPase involved in immune receptor-mediated endocytosis. The Avr3a(EM) form evades recognition by R3a, thus does not trigger R3a-mediated hypersensitivity and does not suppress INF1-induced cell death. The protein is RxLR effector protein Avr3a of Phytophthora infestans (Potato late blight agent).